A 251-amino-acid polypeptide reads, in one-letter code: Large ribosomal subunit protein uL16m (251 aa).

The transit peptide at 1-29 (MWRLLARASAPLLRVPLSDSWALLPASAG) directs the protein to the mitochondrion.

Belongs to the universal ribosomal protein uL16 family. Component of the mitochondrial large ribosomal subunit (mt-LSU). Mature mammalian 55S mitochondrial ribosomes consist of a small (28S) and a large (39S) subunit. The 28S small subunit contains a 12S ribosomal RNA (12S mt-rRNA) and 30 different proteins. The 39S large subunit contains a 16S rRNA (16S mt-rRNA), a copy of mitochondrial valine transfer RNA (mt-tRNA(Val)), which plays an integral structural role, and 52 different proteins.

The protein resides in the mitochondrion. In Homo sapiens (Human), this protein is Large ribosomal subunit protein uL16m (MRPL16).